The chain runs to 155 residues: Small ribosomal subunit protein uS7cz/uS7cy (155 aa).

The protein belongs to the universal ribosomal protein uS7 family. As to quaternary structure, part of the 30S ribosomal subunit.

Its subcellular location is the plastid. It localises to the chloroplast. One of the primary rRNA binding proteins, it binds directly to 16S rRNA where it nucleates assembly of the head domain of the 30S subunit. The chain is Small ribosomal subunit protein uS7cz/uS7cy (rps7-A) from Nandina domestica (Heavenly bamboo).